The chain runs to 124 residues: Small ribosomal subunit protein uS12 (124 aa).

At aspartate 89 the chain carries 3-methylthioaspartic acid.

Belongs to the universal ribosomal protein uS12 family. As to quaternary structure, part of the 30S ribosomal subunit. Contacts proteins S8 and S17. May interact with IF1 in the 30S initiation complex.

With S4 and S5 plays an important role in translational accuracy. Functionally, interacts with and stabilizes bases of the 16S rRNA that are involved in tRNA selection in the A site and with the mRNA backbone. Located at the interface of the 30S and 50S subunits, it traverses the body of the 30S subunit contacting proteins on the other side and probably holding the rRNA structure together. The combined cluster of proteins S8, S12 and S17 appears to hold together the shoulder and platform of the 30S subunit. The chain is Small ribosomal subunit protein uS12 from Hydrogenovibrio crunogenus (strain DSM 25203 / XCL-2) (Thiomicrospira crunogena).